The chain runs to 97 residues: Large ribosomal subunit protein uL23 (97 aa).

This sequence belongs to the universal ribosomal protein uL23 family. Part of the 50S ribosomal subunit. Contacts protein L29, and trigger factor when it is bound to the ribosome.

Its function is as follows. One of the early assembly proteins it binds 23S rRNA. One of the proteins that surrounds the polypeptide exit tunnel on the outside of the ribosome. Forms the main docking site for trigger factor binding to the ribosome. This is Large ribosomal subunit protein uL23 from Brucella canis (strain ATCC 23365 / NCTC 10854 / RM-666).